We begin with the raw amino-acid sequence, 391 residues long: Formate-dependent phosphoribosylglycinamide formyltransferase (391 aa).

N(1)-(5-phospho-beta-D-ribosyl)glycinamide contacts are provided by residues 20-21 (EL) and Glu-80. ATP is bound by residues Arg-112, Lys-153, 158-163 (SSGKGQ), 193-196 (EGFV), and Glu-201. Residues 117–306 (RLAAEELQLP…EFALHVRAFT (190 aa)) form the ATP-grasp domain. Glu-265 and Glu-277 together coordinate Mg(2+). Residues Asp-284, Lys-354, and 361 to 362 (RR) contribute to the N(1)-(5-phospho-beta-D-ribosyl)glycinamide site.

This sequence belongs to the PurK/PurT family. As to quaternary structure, homodimer.

The enzyme catalyses N(1)-(5-phospho-beta-D-ribosyl)glycinamide + formate + ATP = N(2)-formyl-N(1)-(5-phospho-beta-D-ribosyl)glycinamide + ADP + phosphate + H(+). It functions in the pathway purine metabolism; IMP biosynthesis via de novo pathway; N(2)-formyl-N(1)-(5-phospho-D-ribosyl)glycinamide from N(1)-(5-phospho-D-ribosyl)glycinamide (formate route): step 1/1. Involved in the de novo purine biosynthesis. Catalyzes the transfer of formate to 5-phospho-ribosyl-glycinamide (GAR), producing 5-phospho-ribosyl-N-formylglycinamide (FGAR). Formate is provided by PurU via hydrolysis of 10-formyl-tetrahydrofolate. This is Formate-dependent phosphoribosylglycinamide formyltransferase from Aliivibrio fischeri (strain ATCC 700601 / ES114) (Vibrio fischeri).